The chain runs to 237 residues: uncharacterized protein (237 aa).

The N-terminal stretch at 1-28 (MNRPLLSVAGSLFVAAWALYIFSCFQHG) is a signal peptide. Residues 52 to 96 (NARDTAAHPSDTADNTSGSSTTTDPRSHGNAPPAPVGGAAQTHTQ) form a disordered region. Polar residues predominate over residues 63–75 (TADNTSGSSTTTD).

This is an uncharacterized protein from Treponema pallidum (strain Nichols).